A 247-amino-acid polypeptide reads, in one-letter code: Probable transcriptional regulatory protein YebC (247 aa).

Positions 1 to 20 are disordered; the sequence is MAGHSKWANTRHRKAAQDAK.

It belongs to the TACO1 family.

It is found in the cytoplasm. The polypeptide is Probable transcriptional regulatory protein YebC (Salmonella arizonae (strain ATCC BAA-731 / CDC346-86 / RSK2980)).